Reading from the N-terminus, the 280-residue chain is Nitrogenase iron protein (280 aa).

Residue 8–15 (GKGGIGKS) coordinates ATP. Cys-95 is a [4Fe-4S] cluster binding site. Position 98 is an ADP-ribosylarginine; by dinitrogenase reductase ADP-ribosyltransferase (Arg-98). Residue Cys-128 coordinates [4Fe-4S] cluster.

It belongs to the NifH/BchL/ChlL family. In terms of assembly, homodimer. Requires [4Fe-4S] cluster as cofactor. The reversible ADP-ribosylation of Arg-98 inactivates the nitrogenase reductase and regulates nitrogenase activity.

It catalyses the reaction N2 + 8 reduced [2Fe-2S]-[ferredoxin] + 16 ATP + 16 H2O = H2 + 8 oxidized [2Fe-2S]-[ferredoxin] + 2 NH4(+) + 16 ADP + 16 phosphate + 6 H(+). The key enzymatic reactions in nitrogen fixation are catalyzed by the nitrogenase complex, which has 2 components: the iron protein and the molybdenum-iron protein. The protein is Nitrogenase iron protein of Methanospirillum hungatei JF-1 (strain ATCC 27890 / DSM 864 / NBRC 100397 / JF-1).